A 719-amino-acid polypeptide reads, in one-letter code: MEFKYSEVVEPSTYYTEGLCEGIDVRKSKFTTLEDRGAIRAHEDWNKHIGPCGEYRGTLGPRFSFISVAVPECIPERLEVISYANEFAFLHDDVTDHVGHDTGEVENDEMMTVFLEAAHTGAIDTSNKVDIRRAGKKRIQSQLFLEMLAIDPECAKTTMKSWARFVEVGSSRQHETRFVELAKYIPYRIMDVGEMFWFGLVTFGLGLHIPDHELELCRELMANAWIAVGLQNDIWSWPKERDAATLHGKDHVVNAIWVLMQEHQTDVDGAMQICRKLIVEYVAKYLEVIEATKNDESISLDLRKYLDAMLYSISGNVVWSLECPRYNPDVSFNKTQLEWMRQGLPSLESCPVLARSPEIDSDESAVSPTADESDSTEDSLGSGSRQDSSLSTGLSLSPVHSNEGKDLQRVDTDHIFFEKAVLEAPYDYIASMPSKGVRDQFIDALNDWLRVPDVKVGKIKDAVRVLHNSSLLLDDFQDNSPLRRGKPSTHNIFGSAQTVNTATYSIIKAIGQIMEFSAGESVQEVMNSIMILFQGQAMDLFWTYNGHVPSEEEYYRMIDQKTGQLFSIATSLLLNAADNEIPRTKIQSCLHRLTRLLGRCFQIRDDYQNLVSADYTKQKGFCEDLDEGKWSLALIHMIHKQRSHMALLNVLSTGRKHGGMTLEQKQFVLDIIEEEKSLDYTRSVMMDLHVQLRAEIGRIEILLDSPNPAMRLLLELLRV.

A fusicocca-2,10(14)-diene synthase region spans residues 1–334; sequence MEFKYSEVVE…RYNPDVSFNK (334 aa). Mg(2+)-binding residues include aspartate 92 and aspartate 96. The geranylgeranyl diphosphate synthase stretch occupies residues 335-719; it reads TQLEWMRQGL…MRLLLELLRV (385 aa). Positions 358 to 404 are disordered; the sequence is EIDSDESAVSPTADESDSTEDSLGSGSRQDSSLSTGLSLSPVHSNEG. Residues 378-400 are compositionally biased toward polar residues; the sequence is DSLGSGSRQDSSLSTGLSLSPVH. Isopentenyl diphosphate contacts are provided by lysine 435, arginine 438, and histidine 467. Mg(2+) is bound by residues aspartate 474 and aspartate 478. A dimethylallyl diphosphate-binding site is contributed by arginine 483. Residue arginine 484 coordinates isopentenyl diphosphate. Residues lysine 561, threonine 562, glutamine 602, asparagine 609, lysine 619, and lysine 629 each coordinate dimethylallyl diphosphate.

This sequence in the N-terminal section; belongs to the terpene synthase family. It in the C-terminal section; belongs to the FPP/GGPP synthase family. As to quaternary structure, hexamer.

The catalysed reaction is geranylgeranyl diphosphate = fusicocca-2,10(14)-diene + diphosphate. It catalyses the reaction isopentenyl diphosphate + (2E,6E)-farnesyl diphosphate = (2E,6E,10E)-geranylgeranyl diphosphate + diphosphate. The protein operates within mycotoxin biosynthesis. In terms of biological role, multifunctional diterpene synthase; part of the 2 gene clusters that mediate the biosynthesis of fusicoccins, diterpene glucosides that display phytohormone-like activity and function as potent activators of plasma membrane H(+)-ATPases in plants by modifying 14-3-3 proteins and cause the plant disease constriction canker. The first step in the pathway is performed by the fusicoccadiene synthase PaFS that possesses both prenyl transferase and terpene cyclase activity, converting isopentenyl diphosphate and dimethylallyl diphosphate into geranylgeranyl diphosphate (GGDP) and successively converting GGDP into fusicocca-2,10(14)-diene, a precursor for fusicoccin H. Fusicoccadiene synthase is an allosteric enzyme for GGPP cyclization that generates 64% fusicoccadiene, 9% delta-araneosene, and one additional unidentified diterpene product, when incubated with GGPP. In the absence of isopentenyl diphosphate (IPP), PaFS can also solvolyze the shorter chain geranyl diphosphate (GPP) and farnesyl diphosphate (FPP) as alternative substrates to yield predominantly acyclic products. FPP is converted to farnesol (60.5%), nerolidol (14.0%), and farnesene (14.0%), while GPP is converted to a mixture of geraniol (59.5%) and linalool (35.0%). The second step is the oxidation at the C-8 position by the cytochrome P450 monooxygenase PaP450-2 to yield fusicocca-2,10(14)-diene-8-beta-ol. The cytochrome P450 monooxygenase PaP450-1 then catalyzes the hydroxylation at the C-16 position to produce fusicocca-2,10(14)-diene-8-beta,16-diol. The dioxygenase fc-dox then catalyzes the 16-oxydation of fusicocca-2,10(14)-diene-8-beta,16-diol to yield an aldehyde (8-beta-hydroxyfusicocca-1,10(14)-dien-16-al). The short-chain dehydrogenase/reductase fc-sdr catalyzes the reduction of the aldehyde to yield fusicocca-1,10(14)-diene-8-beta,16-diol. The next step is the hydroxylation at C-9 performed by the cytochrome P450 monooxygenase PaP450-3 that leads to fusicoccin H aglycon which is glycosylated to fusicoccin H by the O-glycosyltransferase PAGT. Hydroxylation at C-12 by the cytochrome P450 monooxygenase PaP450-4 leads then to the production of fusicoccin Q and is followed by methylation by the O-methyltransferase PAMT to yield fusicoccin P. Fusicoccin P is further converted to fusicoccin J via prenylation by the O-glucose prenyltransferase PaPT. Cytochrome P450 monooxygenase PaP450-5 then performs hydroxylation at C-19 to yield dideacetyl-fusicoccin A which is acetylated to 3'-O-deacetyl-fusicoccin A by the O-acetyltransferase PaAT-2. Finally, a another acetylation by the O-acetyltransferase PaAT-1 yields fusicoccin A. The polypeptide is Fusicoccadiene synthase (Phomopsis amygdali (Fusicoccum amygdali)).